The chain runs to 458 residues: Argininosuccinate lyase (458 aa).

Belongs to the lyase 1 family. Argininosuccinate lyase subfamily.

The protein resides in the cytoplasm. The catalysed reaction is 2-(N(omega)-L-arginino)succinate = fumarate + L-arginine. Its pathway is amino-acid biosynthesis; L-arginine biosynthesis; L-arginine from L-ornithine and carbamoyl phosphate: step 3/3. The sequence is that of Argininosuccinate lyase from Anoxybacillus flavithermus (strain DSM 21510 / WK1).